The chain runs to 347 residues: Photosystem II protein D1 (347 aa).

Transmembrane regions (helical) follow at residues 31–48, 120–135, and 144–158; these read YIGW…LAII, HFIG…EWEF, and WIYL…AATA. Residue His120 coordinates chlorophyll a. Trp128 provides a ligand contact to pheophytin a. 2 residues coordinate [CaMn4O5] cluster: Asp172 and Glu191. A helical transmembrane segment spans residues 199–220; the sequence is FHILGVAGVFGGSLFSAMHGSL. His200 is a chlorophyll a binding site. Residues His217 and 266-267 contribute to the a quinone site; that span reads SF. His217 is a Fe cation binding site. Residue His274 coordinates Fe cation. A helical transmembrane segment spans residues 276–290; it reads FLAAWPVIGIWFTAL. The [CaMn4O5] cluster site is built by His334, Glu335, and Asp344.

Belongs to the reaction center PufL/M/PsbA/D family. As to quaternary structure, PSII is composed of 1 copy each of membrane proteins PsbA, PsbB, PsbC, PsbD, PsbE, PsbF, PsbH, PsbI, PsbJ, PsbK, PsbL, PsbM, PsbT, PsbX, PsbY, PsbZ, Psb30/Ycf12, at least 3 peripheral proteins of the oxygen-evolving complex and a large number of cofactors. It forms dimeric complexes. It depends on The D1/D2 heterodimer binds P680, chlorophylls that are the primary electron donor of PSII, and subsequent electron acceptors. It shares a non-heme iron and each subunit binds pheophytin, quinone, additional chlorophylls, carotenoids and lipids. D1 provides most of the ligands for the Mn4-Ca-O5 cluster of the oxygen-evolving complex (OEC). There is also a Cl(-1) ion associated with D1 and D2, which is required for oxygen evolution. The PSII complex binds additional chlorophylls, carotenoids and specific lipids. as a cofactor. In terms of processing, tyr-163 forms a radical intermediate that is referred to as redox-active TyrZ, YZ or Y-Z.

Its subcellular location is the plastid. The protein localises to the chloroplast thylakoid membrane. It carries out the reaction 2 a plastoquinone + 4 hnu + 2 H2O = 2 a plastoquinol + O2. Photosystem II (PSII) is a light-driven water:plastoquinone oxidoreductase that uses light energy to abstract electrons from H(2)O, generating O(2) and a proton gradient subsequently used for ATP formation. It consists of a core antenna complex that captures photons, and an electron transfer chain that converts photonic excitation into a charge separation. The D1/D2 (PsbA/PsbD) reaction center heterodimer binds P680, the primary electron donor of PSII as well as several subsequent electron acceptors. The protein is Photosystem II protein D1 of Alexandrium tamarense (Red tide dinoflagellate).